An 877-amino-acid chain; its full sequence is Clumping factor B (877 aa).

An N-terminal signal peptide occupies residues 1–44; that stretch reads MKKRIDYLSNKQNKYSIRRFTVGTTSVIVGATILFGIGNHQAQA. The short motif at 15–26 is the YSIRK-G/S signaling motif element; it reads YSIRRFTVGTTS. Polar residues-rich tracts occupy residues 44-61 and 68-95; these read ASEQ…NASA and MIET…NVDS. A disordered region spans residues 44–192; sequence ASEQSNDTTQ…QGTSKPSVRT (149 aa). Residues 45–542 form a ligand binding A region region; the sequence is SEQSNDTTQS…GSADGDSAVN (498 aa). The span at 96-119 shows a compositional bias: low complexity; the sequence is TTKPMSTQTSNTTTTEPASTNETP. The segment covering 120–189 has biased composition (polar residues); the sequence is QPTAIKNQAT…SNAQGTSKPS (70 aa). Positions 272–276 match the MIDAS-like motif motif; the sequence is DYSNS. The interval 530–849 is disordered; that stretch reads YGGGSADGDS…ETGDKSENTN (320 aa). Residues 545–555 are compositionally biased toward pro residues; sequence DPTPGPPVDPE. Residues 556 to 801 are compositionally biased toward acidic residues; the sequence is PSPDPEPEPT…SDSDSDSDSD (246 aa). Residues 805-816 show a composition bias toward polar residues; that stretch reads RVTPPNNEQKAP. The span at 833–846 shows a compositional bias: basic and acidic residues; the sequence is HKTDALPETGDKSE. Positions 838-842 match the LPXTG sorting signal motif; sequence LPETG. T841 bears the Pentaglycyl murein peptidoglycan amidated threonine mark. The propeptide at 842–877 is removed by sortase; sequence GDKSENTNATLFGAMMALLGSLLLFRKRKQDHKEKA.

This sequence belongs to the serine-aspartate repeat-containing protein (SDr) family. Proteolytically cleaved by aureolysin (aur). This cleavage leads to the inactivation of ClfB.

It localises to the secreted. Its subcellular location is the cell wall. Its function is as follows. Cell surface-associated protein implicated in virulence by promoting bacterial attachment to both alpha- and beta-chains of human fibrinogen and inducing the formation of bacterial clumps. Partly responsible for mediating bacterial attachment to the highly keratinized squamous epithelial cells from the nasal cavity via an interaction with cytokeratin K10 (K10). Also promotes bacterial attachment to cultured keratinocytes, possibly through an interaction with cytokeratin K10. Binds mouse cytokeratin K10. Activates human platelet aggregation. This Staphylococcus aureus (strain NCTC 8325 / PS 47) protein is Clumping factor B (clfB).